Here is a 409-residue protein sequence, read N- to C-terminus: Probable beta-1,3-galactosyltransferase 3 (409 aa).

The chain crosses the membrane as a helical; Signal-anchor for type II membrane protein span at residues 20-42 (WTFLLCFGSFCFGILFTDRMWII).

The protein belongs to the glycosyltransferase 31 family. Mn(2+) serves as cofactor.

Its subcellular location is the golgi apparatus membrane. Its pathway is protein modification; protein glycosylation. Its function is as follows. Beta-1,3-galactosyltransferase that transfers galactose from UDP-galactose to substrates with a terminal glycosyl residue. The chain is Probable beta-1,3-galactosyltransferase 3 (B3GALT3) from Arabidopsis thaliana (Mouse-ear cress).